The primary structure comprises 456 residues: Non-structural protein V (456 aa).

The disordered stretch occupies residues 53–92; the sequence is SGESEQVEGGMSKDDGDVERRNLEDLSSTSPTDGTIGKRV. A compositionally biased stretch (basic and acidic residues) spans 63 to 76; sequence MSKDDGDVERRNLE. Serine 257 carries the phosphoserine; by host modification. Residues 265-324 form a disordered region; sequence ISPEDEEPSSVGGKPNESIGRTIEGQSIRDNLQAKDNKSTDVPGAGPKDSAVKEEPPQKR. A Phosphoserine; by host modification is found at serine 350. Zn(2+)-binding residues include histidine 408, cysteine 427, cysteine 431, cysteine 443, cysteine 445, cysteine 448, cysteine 452, and cysteine 455.

The protein belongs to the paramyxoviruses V protein family. In terms of assembly, interacts with host IFIH1/MDA5, DHX58/LGP2, STAT1 and STAT2. Interacts (via N-terminus) with host UBXN1 (via C-terminal UBX domain); this interaction inhibits interferon-alpha/beta (IFN-alpha/beta) production. Interacts with host RIGI regulatory protein (via CARDs domain) and host TRIM25 (via SPRY domain); these interactions prevent TRIM25-mediated ubiquitination of RIG-I and disrupts downstream RIG-I signaling.

The protein localises to the host cytoplasm. In terms of biological role, plays an essential role in the inhibition of host immune response. Prevents the establishment of cellular antiviral state by blocking interferon-alpha/beta (IFN-alpha/beta) production and signaling pathway. Interacts with host IFIH1/MDA5 and DHX58/LGP2 to inhibit the transduction pathway involved in the activation of IFN-beta promoter, thus protecting the virus against cell antiviral state. Blocks the type I interferon signaling pathway by interacting with host STAT1 and STAT2 and thereby inhibiting their phosphorylation and subsequent nuclear translocation. Efficiently blocks the type II interferon signaling pathway. Suppresses interferon induction by interacting with and stabilizing host UBXN1, a negative regulator of both RIG-I-like receptors (RLR) and NF-kappa-B pathways. Blocks the type I interferon signaling pathway by disrupting the RIG-I signaling pathway. This Cynopterus brachyotis (Lesser short-nosed fruit bat) protein is Non-structural protein V (P/V/C).